The sequence spans 402 residues: Sex hormone-binding globulin (402 aa).

Positions methionine 1–alanine 29 are cleaved as a signal peptide. Residue threonine 36 is glycosylated (O-linked (GalNAc...) threonine). Laminin G-like domains lie at valine 45–cysteine 217 and glycine 224–cysteine 390. 2 cysteine pairs are disulfide-bonded: cysteine 193–cysteine 217 and cysteine 362–cysteine 390. N-linked (GlcNAc...) asparagine glycans are attached at residues asparagine 380 and asparagine 396.

Homodimer. Post-translationally, variant Asn-356 contains one N-linked (GlcNAc...) at position 356. In terms of tissue distribution, isoform 1 and isoform 2 are present in liver and testis.

Its subcellular location is the secreted. In terms of biological role, functions as an androgen transport protein, but may also be involved in receptor mediated processes. Each dimer binds one molecule of steroid. Specific for 5-alpha-dihydrotestosterone, testosterone, and 17-beta-estradiol. Regulates the plasma metabolic clearance rate of steroid hormones by controlling their plasma concentration. In Homo sapiens (Human), this protein is Sex hormone-binding globulin.